The primary structure comprises 465 residues: Argininosuccinate lyase (465 aa).

It belongs to the lyase 1 family. Argininosuccinate lyase subfamily.

Its subcellular location is the cytoplasm. The enzyme catalyses 2-(N(omega)-L-arginino)succinate = fumarate + L-arginine. It functions in the pathway amino-acid biosynthesis; L-arginine biosynthesis; L-arginine from L-ornithine and carbamoyl phosphate: step 3/3. This chain is Argininosuccinate lyase, found in Methylococcus capsulatus (strain ATCC 33009 / NCIMB 11132 / Bath).